An 830-amino-acid chain; its full sequence is Penicillin-binding protein 1A (830 aa).

Positions 1-17 (MTERKREHKDRKQKKNS) are enriched in basic residues. Residues 1–20 (MTERKREHKDRKQKKNSPKN) are disordered. The Cytoplasmic segment spans residues 1–30 (MTERKREHKDRKQKKNSPKNQSKVTKFLKW). The helical; Signal-anchor for type II membrane protein transmembrane segment at 31 to 51 (FFIGILLLGITAVTVVGIYVL) threads the bilayer. Topologically, residues 52-830 (SIIRSSPELD…QNGQNNNITQ (779 aa)) are extracellular. A transglycosylase region spans residues 72 to 244 (SILYDDQGNF…PTSYDGLSEA (173 aa)). The active-site Proton donor; for transglycosylase activity is Glu-111. The tract at residues 378–663 (ASATIIDYKT…TSPIFGKIMG (286 aa)) is transpeptidase. Ser-417 acts as the Acyl-ester intermediate; for transpeptidase activity in catalysis. A disordered region spans residues 731-830 (APDTNDNNNS…QNGQNNNITQ (100 aa)). The span at 735–746 (NDNNNSGANEGN) shows a compositional bias: low complexity. The span at 747–758 (KQQETKPEEVKP) shows a compositional bias: basic and acidic residues. Composition is skewed to low complexity over residues 759–807 (NENN…NTNN) and 816–830 (GNNQ…NITQ).

The protein in the N-terminal section; belongs to the glycosyltransferase 51 family. It in the C-terminal section; belongs to the transpeptidase family.

Its subcellular location is the cell membrane. The enzyme catalyses [GlcNAc-(1-&gt;4)-Mur2Ac(oyl-L-Ala-gamma-D-Glu-L-Lys-D-Ala-D-Ala)](n)-di-trans,octa-cis-undecaprenyl diphosphate + beta-D-GlcNAc-(1-&gt;4)-Mur2Ac(oyl-L-Ala-gamma-D-Glu-L-Lys-D-Ala-D-Ala)-di-trans,octa-cis-undecaprenyl diphosphate = [GlcNAc-(1-&gt;4)-Mur2Ac(oyl-L-Ala-gamma-D-Glu-L-Lys-D-Ala-D-Ala)](n+1)-di-trans,octa-cis-undecaprenyl diphosphate + di-trans,octa-cis-undecaprenyl diphosphate + H(+). It catalyses the reaction Preferential cleavage: (Ac)2-L-Lys-D-Ala-|-D-Ala. Also transpeptidation of peptidyl-alanyl moieties that are N-acyl substituents of D-alanine.. The protein operates within cell wall biogenesis; peptidoglycan biosynthesis. In terms of biological role, cell wall formation. Synthesis of cross-linked peptidoglycan from the lipid intermediates. The enzyme has a penicillin-insensitive transglycosylase N-terminal domain (formation of linear glycan strands) and a penicillin-sensitive transpeptidase C-terminal domain (cross-linking of the peptide subunits). The polypeptide is Penicillin-binding protein 1A (pbpA) (Clostridium perfringens (strain ATCC 13124 / DSM 756 / JCM 1290 / NCIMB 6125 / NCTC 8237 / Type A)).